The following is a 192-amino-acid chain: Peptide deformylase (192 aa).

Fe cation is bound by residues C102 and H145. The active site involves E146. H149 lines the Fe cation pocket.

Belongs to the polypeptide deformylase family. The cofactor is Fe(2+).

The catalysed reaction is N-terminal N-formyl-L-methionyl-[peptide] + H2O = N-terminal L-methionyl-[peptide] + formate. In terms of biological role, removes the formyl group from the N-terminal Met of newly synthesized proteins. Requires at least a dipeptide for an efficient rate of reaction. N-terminal L-methionine is a prerequisite for activity but the enzyme has broad specificity at other positions. The polypeptide is Peptide deformylase (Thermus thermophilus (strain ATCC BAA-163 / DSM 7039 / HB27)).